The following is a 664-amino-acid chain: Macoilin-1 (664 aa).

4 consecutive transmembrane segments (helical) span residues 28–48 (TFLY…DFVL), 75–95 (AFSV…LLFI), 120–140 (VCLP…AIRF), and 154–174 (FAAH…KSYV). A disordered region spans residues 206-225 (QMLQRQERETEEATSKGMSE). Over residues 210 to 219 (RQERETEEAT) the composition is skewed to basic and acidic residues. 5 N-linked (GlcNAc...) asparagine glycosylation sites follow: Asn234, Asn336, Asn339, Asn348, and Asn655. Disordered regions lie at residues 315-364 (VGAG…LAPH) and 644-664 (FMDT…PLKK). A compositionally biased stretch (low complexity) spans 334–348 (SHNSTNGSVPSSSSN). A compositionally biased stretch (polar residues) spans 644-658 (FMDTSPSSLDPNASV).

The protein belongs to the macoilin family.

Its subcellular location is the nucleus membrane. The protein resides in the rough endoplasmic reticulum membrane. Its function is as follows. May play a role in the regulation of neuronal activity. This Danio rerio (Zebrafish) protein is Macoilin-1.